The chain runs to 164 residues: Lipoprotein signal peptidase (164 aa).

A run of 4 helical transmembrane segments spans residues 12–32 (WLWL…LILQ), 42–62 (LFPS…SFLA), 70–90 (WFFA…MYRS), and 102–122 (ALII…GFVV). Catalysis depends on residues D123 and D141. A helical membrane pass occupies residues 137-157 (FNLADTAICVGAALIVLEGFL).

The protein belongs to the peptidase A8 family.

It localises to the cell inner membrane. The enzyme catalyses Release of signal peptides from bacterial membrane prolipoproteins. Hydrolyzes -Xaa-Yaa-Zaa-|-(S,diacylglyceryl)Cys-, in which Xaa is hydrophobic (preferably Leu), and Yaa (Ala or Ser) and Zaa (Gly or Ala) have small, neutral side chains.. The protein operates within protein modification; lipoprotein biosynthesis (signal peptide cleavage). Functionally, this protein specifically catalyzes the removal of signal peptides from prolipoproteins. The sequence is that of Lipoprotein signal peptidase from Shigella flexneri serotype 5b (strain 8401).